Reading from the N-terminus, the 198-residue chain is Recombination protein RecR (198 aa).

Residues 57–72 (CSLCGNLDTVDPCHIC) form a C4-type zinc finger. Residues 80–175 (GLICVVETVG…TVTRVGHGVP (96 aa)) form the Toprim domain.

This sequence belongs to the RecR family.

In terms of biological role, may play a role in DNA repair. It seems to be involved in an RecBC-independent recombinational process of DNA repair. It may act with RecF and RecO. This chain is Recombination protein RecR, found in Gluconobacter oxydans (strain 621H) (Gluconobacter suboxydans).